The following is a 557-amino-acid chain: 2-succinyl-5-enolpyruvyl-6-hydroxy-3-cyclohexene-1-carboxylate synthase (557 aa).

This sequence belongs to the TPP enzyme family. MenD subfamily. As to quaternary structure, homodimer. Mg(2+) is required as a cofactor. The cofactor is Mn(2+). Thiamine diphosphate serves as cofactor.

The catalysed reaction is isochorismate + 2-oxoglutarate + H(+) = 5-enolpyruvoyl-6-hydroxy-2-succinyl-cyclohex-3-ene-1-carboxylate + CO2. The protein operates within quinol/quinone metabolism; 1,4-dihydroxy-2-naphthoate biosynthesis; 1,4-dihydroxy-2-naphthoate from chorismate: step 2/7. Its pathway is quinol/quinone metabolism; menaquinone biosynthesis. Functionally, catalyzes the thiamine diphosphate-dependent decarboxylation of 2-oxoglutarate and the subsequent addition of the resulting succinic semialdehyde-thiamine pyrophosphate anion to isochorismate to yield 2-succinyl-5-enolpyruvyl-6-hydroxy-3-cyclohexene-1-carboxylate (SEPHCHC). The sequence is that of 2-succinyl-5-enolpyruvyl-6-hydroxy-3-cyclohexene-1-carboxylate synthase from Staphylococcus aureus (strain MSSA476).